The primary structure comprises 155 residues: Ribosomal RNA large subunit methyltransferase H (155 aa).

S-adenosyl-L-methionine contacts are provided by residues Leu72, Gly103, and 122-127 (LSPLTL).

Belongs to the RNA methyltransferase RlmH family. Homodimer.

Its subcellular location is the cytoplasm. The enzyme catalyses pseudouridine(1915) in 23S rRNA + S-adenosyl-L-methionine = N(3)-methylpseudouridine(1915) in 23S rRNA + S-adenosyl-L-homocysteine + H(+). Functionally, specifically methylates the pseudouridine at position 1915 (m3Psi1915) in 23S rRNA. This is Ribosomal RNA large subunit methyltransferase H from Haemophilus ducreyi (strain 35000HP / ATCC 700724).